Consider the following 337-residue polypeptide: Glutathione transferase 3 (337 aa).

The Cytoplasmic portion of the chain corresponds to 1-239 (MPTKSTFSRW…NKYQYTLDFC (239 aa)). 4 positions are modified to phosphoserine: serine 66, serine 72, serine 99, and serine 116. The tract at residues 66-95 (SMTVDQSKDERNEYGSGSGNGSGSGSCDTA) is disordered. The interval 107–132 (KEDDDEKPQSGDETSATKPLSSRNAN) is disordered. Polar residues predominate over residues 117 to 132 (GDETSATKPLSSRNAN). The helical transmembrane segment at 240–260 (LPILTWLLFFRGIPTLVSYYI) threads the bilayer. Topologically, residues 261 to 313 (NFIRYDLNIELDPMTFNLTKFLISLAIFKTCNNKNIDFHSFRCVNQLWTQLCT) are perinuclear space. Residues 314–336 (VNRSLGMVPLVFSMVSCLLTLYV) traverse the membrane as a helical segment. Residue leucine 337 is a topological domain, cytoplasmic.

The protein localises to the nucleus membrane. In Saccharomyces cerevisiae (strain ATCC 204508 / S288c) (Baker's yeast), this protein is Glutathione transferase 3 (GTT3).